We begin with the raw amino-acid sequence, 218 residues long: Protein-L-isoaspartate O-methyltransferase (218 aa).

Serine 66 is an active-site residue.

Belongs to the methyltransferase superfamily. L-isoaspartyl/D-aspartyl protein methyltransferase family.

The protein localises to the cytoplasm. The catalysed reaction is [protein]-L-isoaspartate + S-adenosyl-L-methionine = [protein]-L-isoaspartate alpha-methyl ester + S-adenosyl-L-homocysteine. Its function is as follows. Catalyzes the methyl esterification of L-isoaspartyl residues in peptides and proteins that result from spontaneous decomposition of normal L-aspartyl and L-asparaginyl residues. It plays a role in the repair and/or degradation of damaged proteins. The polypeptide is Protein-L-isoaspartate O-methyltransferase (Caulobacter sp. (strain K31)).